Here is a 937-residue protein sequence, read N- to C-terminus: Isoleucine--tRNA ligase (937 aa).

The 'HIGH' region motif lies at 57-67; that stretch reads PYANGPIHMGH. E556 is an L-isoleucyl-5'-AMP binding site. Positions 597-601 match the 'KMSKS' region motif; sequence KMSKS. K600 is a binding site for ATP. Residues C895, C898, C915, and C918 each coordinate Zn(2+).

This sequence belongs to the class-I aminoacyl-tRNA synthetase family. IleS type 1 subfamily. As to quaternary structure, monomer. Zn(2+) is required as a cofactor.

It is found in the cytoplasm. It carries out the reaction tRNA(Ile) + L-isoleucine + ATP = L-isoleucyl-tRNA(Ile) + AMP + diphosphate. Its function is as follows. Catalyzes the attachment of isoleucine to tRNA(Ile). As IleRS can inadvertently accommodate and process structurally similar amino acids such as valine, to avoid such errors it has two additional distinct tRNA(Ile)-dependent editing activities. One activity is designated as 'pretransfer' editing and involves the hydrolysis of activated Val-AMP. The other activity is designated 'posttransfer' editing and involves deacylation of mischarged Val-tRNA(Ile). This chain is Isoleucine--tRNA ligase, found in Levilactobacillus brevis (strain ATCC 367 / BCRC 12310 / CIP 105137 / JCM 1170 / LMG 11437 / NCIMB 947 / NCTC 947) (Lactobacillus brevis).